A 682-amino-acid chain; its full sequence is Potassium-transporting ATPase ATP-binding subunit (682 aa).

The next 4 helical transmembrane spans lie at 34–54 (PVMFVVWAGSVLTTLLTLAMV), 58–78 (IAGSALFTGIISLWLWFTVLF), 219–239 (IALTILLIALTIVFLLATATL), and 254–274 (VLVALLVCLIPTTIGGLLSAI). Catalysis depends on Asp-307, which acts as the 4-aspartylphosphate intermediate. ATP is bound by residues Asp-344, Glu-348, 377–384 (FTAQSRMS), and Lys-395. Residues Asp-518 and Asp-522 each contribute to the Mg(2+) site. Helical transmembrane passes span 588 to 608 (FAIIPAAFAATYPQLNALNVM), 616 to 636 (AILSAVIFNALIIIFLIPLAL), and 662 to 682 (LVVPFIGIKVIDVLLTLLGLA).

Belongs to the cation transport ATPase (P-type) (TC 3.A.3) family. Type IA subfamily. As to quaternary structure, the system is composed of three essential subunits: KdpA, KdpB and KdpC.

Its subcellular location is the cell inner membrane. The catalysed reaction is K(+)(out) + ATP + H2O = K(+)(in) + ADP + phosphate + H(+). Its function is as follows. Part of the high-affinity ATP-driven potassium transport (or Kdp) system, which catalyzes the hydrolysis of ATP coupled with the electrogenic transport of potassium into the cytoplasm. This subunit is responsible for energy coupling to the transport system and for the release of the potassium ions to the cytoplasm. This is Potassium-transporting ATPase ATP-binding subunit from Salmonella enteritidis PT4 (strain P125109).